We begin with the raw amino-acid sequence, 148 residues long: Ubiquitin-conjugating enzyme E2-17 kDa (148 aa).

Residues Met-1–Met-147 enclose the UBC core domain. Cys-85 functions as the Glycyl thioester intermediate in the catalytic mechanism.

This sequence belongs to the ubiquitin-conjugating enzyme family.

The enzyme catalyses S-ubiquitinyl-[E1 ubiquitin-activating enzyme]-L-cysteine + [E2 ubiquitin-conjugating enzyme]-L-cysteine = [E1 ubiquitin-activating enzyme]-L-cysteine + S-ubiquitinyl-[E2 ubiquitin-conjugating enzyme]-L-cysteine.. The protein operates within protein modification; protein ubiquitination. Functionally, catalyzes the covalent attachment of ubiquitin to other proteins. Mediates the selective degradation of short-lived and abnormal proteins. The chain is Ubiquitin-conjugating enzyme E2-17 kDa from Solanum lycopersicum (Tomato).